A 130-amino-acid chain; its full sequence is Glycine cleavage system H protein (130 aa).

Positions 24 to 106 constitute a Lipoyl-binding domain; sequence GIKVGISAFA…YQEGWLLKIT (83 aa). Residue lysine 65 is modified to N6-lipoyllysine.

This sequence belongs to the GcvH family. In terms of assembly, the glycine cleavage system is composed of four proteins: P, T, L and H. Requires (R)-lipoate as cofactor.

Its function is as follows. The glycine cleavage system catalyzes the degradation of glycine. The H protein shuttles the methylamine group of glycine from the P protein to the T protein. This is Glycine cleavage system H protein from Synechococcus sp. (strain RCC307).